Consider the following 444-residue polypeptide: Probable kynurenine--oxoglutarate transaminase BNA3 (444 aa).

Position 271 is an N6-(pyridoxal phosphate)lysine (Lys-271).

It belongs to the class-I pyridoxal-phosphate-dependent aminotransferase family. In terms of assembly, homodimer. Pyridoxal 5'-phosphate is required as a cofactor.

Its subcellular location is the cytoplasm. The protein resides in the mitochondrion. The catalysed reaction is L-kynurenine + 2-oxoglutarate = kynurenate + L-glutamate + H2O. It functions in the pathway amino-acid degradation; L-kynurenine degradation; kynurenate from L-kynurenine: step 1/2. Catalyzes the irreversible transamination of the L-tryptophan metabolite L-kynurenine to form kynurenic acid (KA). In Saccharomyces cerevisiae (strain ATCC 204508 / S288c) (Baker's yeast), this protein is Probable kynurenine--oxoglutarate transaminase BNA3 (BNA3).